Here is a 952-residue protein sequence, read N- to C-terminus: UPF0182 protein SRU_2225 (952 aa).

A run of 7 helical transmembrane segments spans residues 12–32 (ILLGIIGVVFTVLLVTPGLVV), 52–72 (AQVLLFVLVFLVAGLYFGGNF), 109–129 (LGYVVAGVLSLLFAAGFSGRW), 168–188 (AVVGLAFLGLLALVTGYVIAG), 207–227 (LGANLIFLLLGWAWGFYLDLY), 247–267 (VVIPALYVMVAATLVLAGLVG), and 277–297 (LLGIGGAGYLVLLVGGLVLAP). The interval 917–952 (VPLPDTTGTVPPPTSSDTTGTMTAPTGDVSEVTGGS) is disordered. Polar residues predominate over residues 931–940 (SSDTTGTMTA).

Belongs to the UPF0182 family.

It localises to the cell membrane. The protein is UPF0182 protein SRU_2225 of Salinibacter ruber (strain DSM 13855 / M31).